We begin with the raw amino-acid sequence, 368 residues long: MAKQDFYKILGVEKSASLTEIKKAYRNLVNIYHPDKNTKKSAEEQKQAEAKFKEIQEAYEILSDETKRKQYDKFGHAAFDQQFGGGSSGFSGFDFGDIFSSFTSGFGFGGSQEQKYSRPLKGENFQAKIYISFIESILGKEISQKLTKYDQCDNCKGSGANSSSDITTCYNCQGRGMQTEVLNIPGFGRVQNKTTCSVCLGSGKNITKNCKKCRGKTIVETKEEVTIKIPAGIQDGMFIRVAGFGGPGHKGGPSGDLHLEINVRQHKHFTRSGNDIHVNMPVSIIDVINQNTVEVPSPTGLKKVRLYDYYKSGQIVNVLRAGAPDPKNPRIIGDLKVHLIFYIPEFSPRQKDDLNQVFAQINDKTKAK.

The J domain maps to 5-75 (DFYKILGVEK…TKRKQYDKFG (71 aa)). The segment at 139 to 222 (GKEISQKLTK…CRGKTIVETK (84 aa)) adopts a CR-type zinc-finger fold. Positions 152, 155, 169, 172, 196, 199, 210, and 213 each coordinate Zn(2+). 4 CXXCXGXG motif repeats span residues 152–159 (CDNCKGSG), 169–176 (CYNCQGRG), 196–203 (CSVCLGSG), and 210–217 (CKKCRGKT).

Belongs to the DnaJ family. Homodimer. The cofactor is Zn(2+).

Its subcellular location is the cytoplasm. Its function is as follows. Participates actively in the response to hyperosmotic and heat shock by preventing the aggregation of stress-denatured proteins and by disaggregating proteins, also in an autonomous, DnaK-independent fashion. Unfolded proteins bind initially to DnaJ; upon interaction with the DnaJ-bound protein, DnaK hydrolyzes its bound ATP, resulting in the formation of a stable complex. GrpE releases ADP from DnaK; ATP binding to DnaK triggers the release of the substrate protein, thus completing the reaction cycle. Several rounds of ATP-dependent interactions between DnaJ, DnaK and GrpE are required for fully efficient folding. Also involved, together with DnaK and GrpE, in the DNA replication of plasmids through activation of initiation proteins. The polypeptide is Chaperone protein DnaJ (Mesomycoplasma hyopneumoniae (strain 232) (Mycoplasma hyopneumoniae)).